The primary structure comprises 247 residues: UPF0259 membrane protein BU276 (247 aa).

6 consecutive transmembrane segments (helical) span residues 20–40 (IGAI…IDMF), 85–105 (IMES…LISV), 114–134 (IVSS…LNFL), 137–157 (FIIQ…SIIL), 188–208 (IIGP…MLLA), and 218–238 (LFLI…IYLF).

The protein belongs to the UPF0259 family.

It localises to the cell membrane. This Buchnera aphidicola subsp. Acyrthosiphon pisum (strain APS) (Acyrthosiphon pisum symbiotic bacterium) protein is UPF0259 membrane protein BU276.